We begin with the raw amino-acid sequence, 578 residues long: Laccase-10 (578 aa).

An N-terminal signal peptide occupies residues 1 to 29 (MGARCLALLLLYGTLLLLLLLPQLPLAGA). 2 consecutive Plastocyanin-like domains span residues 37–153 (NVKL…PKAG) and 163–319 (KDVP…YAPP). Residues Asn-42 and Asn-83 are each glycosylated (N-linked (GlcNAc...) asparagine). Cu cation is bound by residues His-87 and His-89. Asn-119 is a glycosylation site (N-linked (GlcNAc...) asparagine). Cu cation contacts are provided by His-132 and His-134. N-linked (GlcNAc...) asparagine glycans are attached at residues Asn-192, Asn-208, Asn-244, Asn-307, Asn-336, Asn-384, Asn-392, Asn-402, Asn-438, Asn-445, Asn-448, Asn-451, and Asn-461. A Plastocyanin-like 3 domain is found at 428–562 (DFPASPLEPF…KMAWVVNDGP (135 aa)). Cu cation-binding residues include His-479, His-482, His-484, His-541, Cys-542, His-543, and His-547.

The protein belongs to the multicopper oxidase family. The cofactor is Cu cation.

The protein localises to the secreted. It localises to the extracellular space. Its subcellular location is the apoplast. It carries out the reaction 4 hydroquinone + O2 = 4 benzosemiquinone + 2 H2O. Its function is as follows. Lignin degradation and detoxification of lignin-derived products. The sequence is that of Laccase-10 (LAC10) from Oryza sativa subsp. japonica (Rice).